The chain runs to 1616 residues: Replicase large subunit (1616 aa).

A methyltransferase region spans residues 50 to 466; the sequence is FSKSINEEQT…LITKLSMLKD (417 aa). The 210-residue stretch at 72–281 folds into the Alphavirus-like MT domain; that stretch reads TFYNTQLAVH…HSYSNLLKYV (210 aa). The 163-residue stretch at 800–962 folds into the (+)RNA virus helicase ATP-binding domain; it reads MVYSDMAKLR…KLIVDETEKR (163 aa). Residues 828 to 1084 form a helicase region; that stretch reads TLVDGVPGCG…RHTRCFKYYT (257 aa). ATP is bound at residue 832 to 839; that stretch reads GVPGCGKT. In terms of domain architecture, (+)RNA virus helicase C-terminal spans 963–1115; that stretch reads RTTLRCPVDV…DVYMVDSVSA (153 aa). The RdRp catalytic domain maps to 1385–1498; the sequence is MEVLELDVSK…YLPKGCELPN (114 aa).

This sequence belongs to the ssRNA positive-strand viruses RNA-directed RNA polymerase family. In terms of assembly, heterodimer of a large and a small subunit.

The enzyme catalyses RNA(n) + a ribonucleoside 5'-triphosphate = RNA(n+1) + diphosphate. The catalysed reaction is ATP + H2O = ADP + phosphate + H(+). In terms of biological role, is an RNA-dependent RNA polymerase active in viral RNA replication. Functionally, is a methyltransferase active in RNA capping and an RNA helicase. Methyltransferase displays a cytoplasmic capping enzyme activity. This function is necessary since all viral RNAs are synthesized in the cytoplasm, and host capping enzymes are restricted to the nucleus. Helicase region probably exhibits NTPase and RNA unwinding activities (Potential). It also acts as a suppressor of RNA-mediated gene silencing, also known as post-transcriptional gene silencing (PTGS), a mechanism of plant viral defense that limits the accumulation of viral RNAs. May mediate silencing suppression through either inhibition of HEN1-mediated siRNA or siRNA demethylation. The protein is Replicase large subunit of Tobamovirus Ob.